A 626-amino-acid polypeptide reads, in one-letter code: MSRSGAAAEKADSRQRPQMKVNEYKENQNIAYVSLRPAQTTVLIKTAKVYLAPFSLSNYQLDQLMCPKSLSEKNSNNEVACKKTKIKKTCRRIIPPKMKNTSSKAESTLQNSSSAVHTESNKLQPKRTADAMNLSVDVESSQDGDSDEDTTPSLDFSGLSPYERKRLKNISENADFFASLQLSESAARLREMIEKRQPPKSKRKKPKRENGIGCRRSMRLLKVDPSGVSLPAAPTPPTLVADETPLLPPGPLEMTSENQEDNNERFKGFLHTWAGMSKPSSKNTEKGLSSIKSYKANLNGMVISEDTVYKVTTGPIFSMALHPSETRTLVAVGAKFGQVGLCDLTQQPKEDGVYVFHPHSQPVSCLYFSPANPAHILSLSYDGTLRCGDFSRAIFEEVYRNERSSFSSFDFLAEDASTLIVGHWDGNMSLVDRRTPGTSYEKLTSSSMGKIRTVHVHPVHRQYFITAGLRDTHIYDARRLNSRRSQPLISLTEHTKSIASAYFSPLTGNRVVTTCADCNLRIFDSSCISSKIPLLTTIRHNTFTGRWLTRFQAMWDPKQEDCVIVGSMAHPRRVEIFHETGKRVHSFGGEYLVSVCSINAMHPTRYILAGGNSSGKIHVFMNEKSC.

Disordered stretches follow at residues 1–21 and 95–159; these read MSRSGAAAEKADSRQRPQMKV and PPKM…FSGL. Over residues 99-123 the composition is skewed to polar residues; that stretch reads KNTSSKAESTLQNSSSAVHTESNKL. Positions 140–150 are enriched in acidic residues; the sequence is SSQDGDSDEDT. WD repeat units follow at residues 311 to 352, 358 to 400, 402 to 441, 446 to 485, 493 to 533, 535 to 565, and 590 to 626; these read VTTG…KEDG, PHSQ…EVYR, ERSSFSSFDFLAEDASTLIVGHWDGNMSLVDRRTPGTSYE, SSMGKIRTVHVHPVHRQYFITAGLRDTHIYDARRLNSRRS, EHTK…SKIP, LTTIRHNTFTGRWLTRFQAMWDPKQEDCVIV, and EYLVSVCSINAMHPTRYILAGGNSSGKIHVFMNEKSC.

This sequence belongs to the WD repeat DDB2/WDR76 family. Interacts with CUL4A and/or CUL4B.

In terms of biological role, specifically binds 5-hydroxymethylcytosine (5hmC), suggesting that it acts as a specific reader of 5hmC. In Homo sapiens (Human), this protein is WD repeat-containing protein 76 (WDR76).